The following is a 486-amino-acid chain: Nucleolar protein 56 (486 aa).

Positions 298–416 (CAPSLSALIG…VEDRLEYFTS (119 aa)) constitute a Nop domain. The segment at 450–486 (KKAKRLAEESVTATAEAEVDEDAPKPKKKKKSKAGDE) is disordered. Basic residues predominate over residues 475 to 486 (PKKKKKSKAGDE).

It belongs to the NOP5/NOP56 family.

It localises to the nucleus. It is found in the nucleolus. Required for 60S ribosomal subunit synthesis. The protein is Nucleolar protein 56 of Caenorhabditis elegans.